The primary structure comprises 223 residues: Deoxyribose-phosphate aldolase (223 aa).

Asp91 serves as the catalytic Proton donor/acceptor. The Schiff-base intermediate with acetaldehyde role is filled by Lys153. Lys182 serves as the catalytic Proton donor/acceptor.

This sequence belongs to the DeoC/FbaB aldolase family. DeoC type 1 subfamily.

The protein resides in the cytoplasm. It carries out the reaction 2-deoxy-D-ribose 5-phosphate = D-glyceraldehyde 3-phosphate + acetaldehyde. It participates in carbohydrate degradation; 2-deoxy-D-ribose 1-phosphate degradation; D-glyceraldehyde 3-phosphate and acetaldehyde from 2-deoxy-alpha-D-ribose 1-phosphate: step 2/2. In terms of biological role, catalyzes a reversible aldol reaction between acetaldehyde and D-glyceraldehyde 3-phosphate to generate 2-deoxy-D-ribose 5-phosphate. This chain is Deoxyribose-phosphate aldolase, found in Streptococcus pyogenes serotype M28 (strain MGAS6180).